The following is a 199-amino-acid chain: Probable chemoreceptor glutamine deamidase CheD (199 aa).

Belongs to the CheD family.

The catalysed reaction is L-glutaminyl-[protein] + H2O = L-glutamyl-[protein] + NH4(+). Its function is as follows. Probably deamidates glutamine residues to glutamate on methyl-accepting chemotaxis receptors (MCPs), playing an important role in chemotaxis. The sequence is that of Probable chemoreceptor glutamine deamidase CheD from Nitratidesulfovibrio vulgaris (strain ATCC 29579 / DSM 644 / CCUG 34227 / NCIMB 8303 / VKM B-1760 / Hildenborough) (Desulfovibrio vulgaris).